The primary structure comprises 183 residues: UPF0398 protein PEPE_0933 (183 aa).

The protein belongs to the UPF0398 family.

This Pediococcus pentosaceus (strain ATCC 25745 / CCUG 21536 / LMG 10740 / 183-1w) protein is UPF0398 protein PEPE_0933.